The sequence spans 656 residues: Phosphoprotein 85 (656 aa).

Disordered stretches follow at residues 1–174 (MSSR…EGDE) and 615–656 (NGNH…EYCC). The segment covering 46–55 (SATEDLDRME) has biased composition (basic and acidic residues). Composition is skewed to low complexity over residues 59-70 (SPYSVSSDAPSS) and 140-160 (DNSS…RSTS). Pro residues predominate over residues 625–634 (SPPPPLPPRD). A compositionally biased stretch (basic and acidic residues) spans 635-656 (YPQRDERDRHRRDRRDSGEYCC).

This sequence belongs to the herpesviridae pp85 family. Post-translationally, phosphorylated.

It is found in the virion tegument. Its subcellular location is the host cytoplasm. The polypeptide is Phosphoprotein 85 (UL25) (Homo sapiens (Human)).